Reading from the N-terminus, the 284-residue chain is ADP-polyphosphate phosphotransferase 3 (284 aa).

Composition is skewed to basic and acidic residues over residues Met1–Ala22 and Asp260–Arg277. Disordered regions lie at residues Met1 to Gly32 and Asp260 to Phe284.

Belongs to the polyphosphate kinase 2 (PPK2) family. Class I subfamily.

The catalysed reaction is [phosphate](n) + ATP = [phosphate](n+1) + ADP. The enzyme catalyses [phosphate](n) + GTP = [phosphate](n+1) + GDP. In terms of biological role, uses inorganic polyphosphate (polyP) as a donor to convert ADP to ATP. Can also convert GDP to GTP, with lower efficiency. In Rhizobium meliloti (strain 1021) (Ensifer meliloti), this protein is ADP-polyphosphate phosphotransferase 3.